The chain runs to 334 residues: Replication factor C small subunit (334 aa).

49 to 56 (GPPGVGKT) contributes to the ATP binding site.

The protein belongs to the activator 1 small subunits family. RfcS subfamily. Heteromultimer composed of small subunits (RfcS) and large subunits (RfcL).

Functionally, part of the RFC clamp loader complex which loads the PCNA sliding clamp onto DNA. This is Replication factor C small subunit from Methanosarcina barkeri (strain Fusaro / DSM 804).